The following is a 278-amino-acid chain: E3 ubiquitin-protein ligase CHIP (278 aa).

TPR repeat units follow at residues 10-43 (AERLKEDGNNCFKKERFGAAIDAYTEAIALSPNV), 45-77 (AYWTNRALCHMKRKDWTKVEEDCRKAIQLVHNS), and 78-111 (VKAHYMLGLALLQKKEFTNGVKELQRALDLGRCS). Positions 143 to 194 (ELNSLKETCEAALNQQRALDMSRTEESSDEAYTAHTERLKALERVFKKAAEE) form a coiled coil. The U-box domain maps to 199–273 (EVPDYLCCNI…AAYLEKHVWA (75 aa)).

As to quaternary structure, interacts with HSC70-4, PP2AA1, PP2AA3 and PP2A5, as well as with UBC8, UBC9 and UBC10. Also interacts with the chloroplastic proteolytic subunits ClpP4, FtsH1 and FtsH2.

It carries out the reaction S-ubiquitinyl-[E2 ubiquitin-conjugating enzyme]-L-cysteine + [acceptor protein]-L-lysine = [E2 ubiquitin-conjugating enzyme]-L-cysteine + N(6)-ubiquitinyl-[acceptor protein]-L-lysine.. It participates in protein modification; protein ubiquitination. Has E3 ubiquitin-protein ligase activity and may target misfolded substrates towards proteasomal degradation. Regulates the activity of some serine/threonine-protein phosphatases by E3 ubiquitin-protein ligase activity. Required for responses to biotic and abiotic stresses such as auxin, abscisic acid (ABA), low and high temperature and darkness, probably through the activation of serine/threonine-protein phosphatase and the subsequent modification of the plasma membrane composition. Regulates the chloroplastic Clp proteolytic activity in response to stresses. Ubiquitylates FtsH1, a component of the chloroplast FtsH protease, and affects protein degradation in chloroplasts. Mediates plastid precursor degradation to prevent cytosolic precursor accumulation, together with the molecular chaperone HSC70-4. Mediates ubiquitination of transit peptides and thereby led to their degradation through the ubiquitin-proteasome system. This is E3 ubiquitin-protein ligase CHIP from Arabidopsis thaliana (Mouse-ear cress).